Consider the following 264-residue polypeptide: uncharacterized protein (264 aa).

Residues 182 to 198 (TVTGVSNALGFIIAALL) traverse the membrane as a helical segment.

It to E.coli YjiC.

Its subcellular location is the membrane. This is an uncharacterized protein from Escherichia coli (strain K12).